The chain runs to 398 residues: Putative L-rhamnonate dehydratase (398 aa).

Residues His-29 and Arg-55 each coordinate substrate. Positions 221, 247, and 274 each coordinate Mg(2+). The active-site Proton acceptor is the His-324. Glu-344 contributes to the substrate binding site.

The protein belongs to the mandelate racemase/muconate lactonizing enzyme family. RhamD subfamily. Mg(2+) is required as a cofactor.

It carries out the reaction L-rhamnonate = 2-dehydro-3-deoxy-L-rhamnonate + H2O. Its function is as follows. Catalyzes the dehydration of L-rhamnonate to 2-keto-3-deoxy-L-rhamnonate (KDR). The protein is Putative L-rhamnonate dehydratase of Caldivirga maquilingensis (strain ATCC 700844 / DSM 13496 / JCM 10307 / IC-167).